A 107-amino-acid polypeptide reads, in one-letter code: Insulin (107 aa).

The N-terminal stretch at 1–24 (MALWIRSLPLLALLVFSGPGTSYA) is a signal peptide. 3 cysteine pairs are disulfide-bonded: cysteine 31-cysteine 93, cysteine 43-cysteine 106, and cysteine 92-cysteine 97. A propeptide spans 57–84 (DVEQPLVSSPLRGEAGVLPFQQEEYEKV) (c peptide).

This sequence belongs to the insulin family. Heterodimer of a B chain and an A chain linked by two disulfide bonds.

It localises to the secreted. In terms of biological role, insulin decreases blood glucose concentration. It increases cell permeability to monosaccharides, amino acids and fatty acids. It accelerates glycolysis, the pentose phosphate cycle, and glycogen synthesis in liver. This Gallus gallus (Chicken) protein is Insulin (INS).